The following is a 71-amino-acid chain: UPF0346 protein SZO_05010 (71 aa).

This sequence belongs to the UPF0346 family.

In Streptococcus equi subsp. zooepidemicus (strain H70), this protein is UPF0346 protein SZO_05010.